The primary structure comprises 258 residues: Imidazole glycerol phosphate synthase subunit HisF (258 aa).

Catalysis depends on residues Asp11 and Asp130.

It belongs to the HisA/HisF family. Heterodimer of HisH and HisF.

It localises to the cytoplasm. It catalyses the reaction 5-[(5-phospho-1-deoxy-D-ribulos-1-ylimino)methylamino]-1-(5-phospho-beta-D-ribosyl)imidazole-4-carboxamide + L-glutamine = D-erythro-1-(imidazol-4-yl)glycerol 3-phosphate + 5-amino-1-(5-phospho-beta-D-ribosyl)imidazole-4-carboxamide + L-glutamate + H(+). It participates in amino-acid biosynthesis; L-histidine biosynthesis; L-histidine from 5-phospho-alpha-D-ribose 1-diphosphate: step 5/9. Its function is as follows. IGPS catalyzes the conversion of PRFAR and glutamine to IGP, AICAR and glutamate. The HisF subunit catalyzes the cyclization activity that produces IGP and AICAR from PRFAR using the ammonia provided by the HisH subunit. In Escherichia coli O17:K52:H18 (strain UMN026 / ExPEC), this protein is Imidazole glycerol phosphate synthase subunit HisF.